We begin with the raw amino-acid sequence, 703 residues long: Pinin (703 aa).

Ala-2 is subject to N-acetylalanine. Residues 2-32 are a coiled coil; sequence AVAVRTLQEQLEKAKESLKNVDENIRKLTGR. Residues 46-148 form a disordered region; the sequence is ALSGPGGGRG…ETPERPGPIF (103 aa). At Ser-48 the chain carries Phosphoserine. At Arg-54 the chain carries Omega-N-methylarginine. Phosphoserine is present on residues Ser-58, Ser-66, Ser-96, and Ser-100. Basic and acidic residues predominate over residues 87–100; that stretch reads GGERRTRRESRQES. Residue Lys-109 forms a Glycyl lysine isopeptide (Lys-Gly) (interchain with G-Cter in SUMO2) linkage. Phosphoserine occurs at positions 114 and 115. A Glycyl lysine isopeptide (Lys-Gly) (interchain with G-Cter in SUMO2) cross-link involves residue Lys-121. Residue Thr-125 is modified to Phosphothreonine. Residues Lys-138 and Lys-157 each participate in a glycyl lysine isopeptide (Lys-Gly) (interchain with G-Cter in SUMO2) cross-link. A Glycyl lysine isopeptide (Lys-Gly) (interchain with G-Cter in SUMO1); alternate cross-link involves residue Lys-159. A Glycyl lysine isopeptide (Lys-Gly) (interchain with G-Cter in SUMO2); alternate cross-link involves residue Lys-159. Residues 165–236 adopt a coiled-coil conformation; it reads ATERQKRRQE…HNAKIIKYIR (72 aa). The tract at residues 223–285 is sufficient for PSAP complex assembly; sequence EWNEHNAKII…AEQINKMEAR (63 aa). Lys-230 is covalently cross-linked (Glycyl lysine isopeptide (Lys-Gly) (interchain with G-Cter in SUMO2)). Residue Lys-240 is modified to N6-acetyllysine; alternate. Lys-240 carries the N6-succinyllysine; alternate modification. Residues Lys-281, Lys-306, and Lys-313 each participate in a glycyl lysine isopeptide (Lys-Gly) (interchain with G-Cter in SUMO2) cross-link. Disordered stretches follow at residues 284–314, 331–394, and 408–703; these read ARPR…EGKV, RVGT…EEVM, and AEQE…PGQL. 2 stretches are compositionally biased toward basic and acidic residues: residues 348–357 and 366–386; these read EIPIVHSDAE and KQEM…EKQQ. Ser-354 is modified (phosphoserine). A coiled-coil region spans residues 354–411; it reads SDAEKEQEEEEQKQEMEVKMEEETEVRESEKQQDSQPEEVMDVLEMVESVKNVIAEQE. Residues Lys-366 and Lys-372 each participate in a glycyl lysine isopeptide (Lys-Gly) (interchain with G-Cter in SUMO2) cross-link. A phosphoserine mark is found at Ser-382 and Ser-388. Positions 417–433 are enriched in basic and acidic residues; that stretch reads QVERVEPSENEASKELE. A phosphoserine mark is found at Ser-450 and Ser-457. Residues 479 to 489 are compositionally biased toward low complexity; the sequence is PMAQPQAQSLP. Residues Lys-541 and Lys-549 each participate in a glycyl lysine isopeptide (Lys-Gly) (interchain with G-Cter in SUMO2) cross-link. Ser-565 carries the phosphoserine modification. Lys-566 participates in a covalent cross-link: Glycyl lysine isopeptide (Lys-Gly) (interchain with G-Cter in SUMO2). Residues 572-588 show a composition bias toward basic residues; it reads RSRSRGRARNRTSKSRS. Residues 589 to 642 are compositionally biased toward low complexity; that stretch reads RSSSSSSSSSSSTSSSSGSSSSSGSSSSRTSSSSSSTSGSSSRDSSSSTTSSSE. Residues 646–664 are compositionally biased toward basic residues; the sequence is RSRGRGHNRDRKHRRSVDR. A compositionally biased stretch (basic and acidic residues) spans 665–676; the sequence is KRRDASGLERSH. A phosphoserine mark is found at Ser-670 and Ser-691.

This sequence belongs to the pinin family. In terms of assembly, found in a mRNA splicing-dependent exon junction complex (EJC). Found in a complex with SR proteins. Found in a mRNP complex with RNPS1. Component of the PSAP complex consisting of RNPS1, SAP18 and PNN. Interacts with PNISR, CTBP1, CTBP2, KRT8, KRT18, KRT19, PS1D/PNO40, PPIG, RNPS1, SFRS4 and SRRM2. Identified in the spliceosome C complex.

It localises to the nucleus speckle. Its subcellular location is the cell junction. It is found in the desmosome. In terms of biological role, transcriptional activator binding to the E-box 1 core sequence of the E-cadherin promoter gene; the core-binding sequence is 5'CAGGTG-3'. Capable of reversing CTBP1-mediated transcription repression. Auxiliary component of the splicing-dependent multiprotein exon junction complex (EJC) deposited at splice junction on mRNAs. The EJC is a dynamic structure consisting of core proteins and several peripheral nuclear and cytoplasmic associated factors that join the complex only transiently either during EJC assembly or during subsequent mRNA metabolism. Participates in the regulation of alternative pre-mRNA splicing. Associates to spliced mRNA within 60 nt upstream of the 5'-splice sites. Component of the PSAP complex which binds RNA in a sequence-independent manner and is proposed to be recruited to the EJC prior to or during the splicing process and to regulate specific excision of introns in specific transcription subsets. Involved in the establishment and maintenance of epithelia cell-cell adhesion. The protein is Pinin (PNN) of Bos taurus (Bovine).